The chain runs to 544 residues: Cannabidiolic acid synthase (544 aa).

Residues methionine 1–alanine 28 form the signal peptide. A disulfide bridge links cysteine 37 with cysteine 99. N-linked (GlcNAc...) asparagine glycosylation is found at asparagine 45 and asparagine 65. Residues threonine 77–valine 251 form the FAD-binding PCMH-type domain. FAD-binding positions include threonine 109–aspartate 115 and serine 120. The segment at residues histidine 114–cysteine 176 is a cross-link (6-(S-cysteinyl)-8alpha-(pros-histidyl)-FAD (His-Cys)). N-linked (GlcNAc...) asparagine glycosylation is present at asparagine 168. Residues cysteine 176, cysteine 180 to histidine 184, tyrosine 190, glutamate 236, and isoleucine 241 each bind FAD. Histidine 291 contributes to the cannabigerolate binding site. N-linked (GlcNAc...) asparagine glycosylation is found at asparagine 296, asparagine 304, and asparagine 328. Residues tyrosine 416 and glutamate 441 each contribute to the cannabigerolate site. Tyrosine 480–asparagine 482 is an FAD binding site. Tyrosine 483 functions as the Proton acceptor in the catalytic mechanism. A glycan (N-linked (GlcNAc...) asparagine) is linked at asparagine 498.

Belongs to the oxygen-dependent FAD-linked oxidoreductase family. Monomer. FAD serves as cofactor. Glycosylated. Post-translationally, the FAD cofactor is bound via a bicovalent 6-S-cysteinyl, 8alpha-N1-histidyl FAD linkage. As to expression, expressed in young leaves.

It is found in the secreted. Its subcellular location is the extracellular space. The protein resides in the apoplast. It carries out the reaction cannabigerolate + O2 = cannabidiolate + H2O2. The protein operates within secondary metabolite biosynthesis; terpenoid biosynthesis. Its activity is regulated as follows. Inhibited by Hg(2+). In terms of biological role, oxidoreductase involved in the biosynthesis of cannabinoids-related terpenophenolic natural products, which have pharmacological activity. Catalyzes the stereoselective oxidative cyclization of the monoterpene moiety in cannabigerolic acid (CBGA), producing cannabidiolate (CBDA), the major cannabioid in fiber-type Cannabis plants. Can also use cannabinerolic acid as substrate, but not cannabigerol or cannabinerol. This chain is Cannabidiolic acid synthase, found in Cannabis sativa (Hemp).